The chain runs to 430 residues: Threonine synthase (430 aa).

Lys108 is subject to N6-(pyridoxal phosphate)lysine.

The protein belongs to the threonine synthase family. The cofactor is pyridoxal 5'-phosphate.

The enzyme catalyses O-phospho-L-homoserine + H2O = L-threonine + phosphate. It functions in the pathway amino-acid biosynthesis; L-threonine biosynthesis; L-threonine from L-aspartate: step 5/5. In terms of biological role, catalyzes the gamma-elimination of phosphate from L-phosphohomoserine and the beta-addition of water to produce L-threonine. The sequence is that of Threonine synthase (thrC) from Buchnera aphidicola subsp. Baizongia pistaciae (strain Bp).